A 246-amino-acid chain; its full sequence is Transcription factor A, mitochondrial (246 aa).

The transit peptide at 1–42 (MALLRGVWGVLNALGKSGADLCAGCGSRLRYPFSFAYVPKWF) directs the protein to the mitochondrion. Residues 50–118 (PKKPMTSYVR…VYKEEINRIQ (69 aa)) constitute a DNA-binding region (HMG box 1). 2 positions are modified to phosphoserine; by PKA: S56 and S61. Position 122 is a phosphothreonine (T122). A DNA-binding region (HMG box 2) is located at residues 155 to 219 (PKRPRSAYNI…RYYNEMKSWE (65 aa)). S160 is subject to Phosphoserine; by PKA. Residues S193 and S195 each carry the phosphoserine modification.

As to quaternary structure, monomer; binds DNA as a monomer. Homodimer. Component of the mitochondrial transcription initiation complex, composed at least of TFB2M, TFAM and POLRMT. In this complex TFAM recruits POLRMT to the promoter whereas TFB2M induces structural changes in POLRMT to enable promoter opening and trapping of the DNA non-template strand. Upon metabolic stress, forms a complex composed of FOXO3, SIRT3, TFAM and POLRMT. Interacts with TFB1M and TFB2M. Interacts with CLPX; this enhances DNA-binding. In terms of processing, phosphorylation by PKA within the HMG box 1 impairs DNA binding and promotes degradation by the AAA+ Lon protease.

Its subcellular location is the mitochondrion. The protein localises to the mitochondrion matrix. It is found in the mitochondrion nucleoid. In terms of biological role, binds to the mitochondrial light strand promoter and functions in mitochondrial transcription regulation. Component of the mitochondrial transcription initiation complex, composed at least of TFB2M, TFAM and POLRMT that is required for basal transcription of mitochondrial DNA. In this complex, TFAM recruits POLRMT to a specific promoter whereas TFB2M induces structural changes in POLRMT to enable promoter opening and trapping of the DNA non-template strand. Required for accurate and efficient promoter recognition by the mitochondrial RNA polymerase. Promotes transcription initiation from the HSP1 and the light strand promoter by binding immediately upstream of transcriptional start sites. Is able to unwind DNA. Bends the mitochondrial light strand promoter DNA into a U-turn shape via its HMG boxes. Required for maintenance of normal levels of mitochondrial DNA. May play a role in organizing and compacting mitochondrial DNA. The chain is Transcription factor A, mitochondrial from Bos taurus (Bovine).